An 883-amino-acid chain; its full sequence is Integrator complex subunit 6 (883 aa).

In terms of domain architecture, VWFA spans I3–V227. The Inhibitory loop signature appears at M625–E632. Positions R666 to T686 are disordered. S800 is modified (phosphoserine).

It belongs to the Integrator subunit 6 family. As to quaternary structure, component of the Integrator complex, composed of core subunits INTS1, INTS2, INTS3, INTS4, INTS5, INTS6, INTS7, INTS8, INTS9/RC74, INTS10, INTS11/CPSF3L, INTS12, INTS13, INTS14 and INTS15. The core complex associates with protein phosphatase 2A subunits PPP2CA and PPP2R1A, to form the Integrator-PP2A (INTAC) complex.

It is found in the nucleus. The protein resides in the chromosome. Functionally, component of the integrator complex, a multiprotein complex that terminates RNA polymerase II (Pol II) transcription in the promoter-proximal region of genes. The integrator complex provides a quality checkpoint during transcription elongation by driving premature transcription termination of transcripts that are unfavorably configured for transcriptional elongation: the complex terminates transcription by (1) catalyzing dephosphorylation of the C-terminal domain (CTD) of Pol II subunit POLR2A/RPB1 and SUPT5H/SPT5, (2) degrading the exiting nascent RNA transcript via endonuclease activity and (3) promoting the release of Pol II from bound DNA. The integrator complex is also involved in terminating the synthesis of non-coding Pol II transcripts, such as enhancer RNAs (eRNAs), small nuclear RNAs (snRNAs), telomerase RNAs and long non-coding RNAs (lncRNAs). Within the integrator complex, INTS6 acts as a molecular adapter that promotes assembly of protein phosphatase 2A (PP2A) subunits to the integrator core complex, promoting recruitment of PP2A to transcription pause-release checkpoint. Mediates recruitment of cytoplasmic dynein to the nuclear envelope, probably as component of the integrator complex. This Mus musculus (Mouse) protein is Integrator complex subunit 6 (Ints6).